The following is a 176-amino-acid chain: UBA-like domain-containing protein 1 (176 aa).

2 stretches are compositionally biased toward low complexity: residues 88–105 (ESFHSGGSSGSPMATSAT) and 120–137 (TPSWPTAASPPGGPQHLQ). The interval 88–176 (ESFHSGGSSG…RAHPAMEAER (89 aa)) is disordered. Residues 138 to 150 (PQPPLWTPAPPSP) are compositionally biased toward pro residues. Residues 166 to 176 (PRAHPAMEAER) are compositionally biased toward basic and acidic residues.

Belongs to the UBALD family.

This chain is UBA-like domain-containing protein 1 (Ubald1), found in Rattus norvegicus (Rat).